A 271-amino-acid chain; its full sequence is 2-dehydro-3-deoxyphosphooctonate aldolase (271 aa).

This sequence belongs to the KdsA family.

Its subcellular location is the cytoplasm. It carries out the reaction D-arabinose 5-phosphate + phosphoenolpyruvate + H2O = 3-deoxy-alpha-D-manno-2-octulosonate-8-phosphate + phosphate. The protein operates within carbohydrate biosynthesis; 3-deoxy-D-manno-octulosonate biosynthesis; 3-deoxy-D-manno-octulosonate from D-ribulose 5-phosphate: step 2/3. It functions in the pathway bacterial outer membrane biogenesis; lipopolysaccharide biosynthesis. The protein is 2-dehydro-3-deoxyphosphooctonate aldolase of Campylobacter jejuni subsp. jejuni serotype O:6 (strain 81116 / NCTC 11828).